Reading from the N-terminus, the 777-residue chain is 1,4-alpha-glucan branching enzyme GlgB (777 aa).

Asp408 functions as the Nucleophile in the catalytic mechanism. Catalysis depends on Glu461, which acts as the Proton donor.

This sequence belongs to the glycosyl hydrolase 13 family. GlgB subfamily. As to quaternary structure, monomer.

The catalysed reaction is Transfers a segment of a (1-&gt;4)-alpha-D-glucan chain to a primary hydroxy group in a similar glucan chain.. Its pathway is glycan biosynthesis; glycogen biosynthesis. Functionally, catalyzes the formation of the alpha-1,6-glucosidic linkages in glycogen by scission of a 1,4-alpha-linked oligosaccharide from growing alpha-1,4-glucan chains and the subsequent attachment of the oligosaccharide to the alpha-1,6 position. This Actinobacillus pleuropneumoniae serotype 7 (strain AP76) protein is 1,4-alpha-glucan branching enzyme GlgB.